The sequence spans 484 residues: Calcium-dependent protein kinase 26 (484 aa).

The Protein kinase domain occupies 24–282 (YSLGHKLGQG…AHQVLRHPWI (259 aa)). Residues 30–38 (LGQGQFGTT) and Lys53 each bind ATP. The active-site Proton acceptor is the Asp148. At Ser188 the chain carries Phosphoserine. The interval 288–318 (APDRALDPAVLSRLKQFSAMNKLKQMALRVI) is autoinhibitory domain. EF-hand domains lie at 325-360 (EEIA…YGST), 361-396 (LKDT…LNKL), 397-432 (EREE…QGMS), and 436-466 (LEDV…GIVG). Positions 338, 340, 342, 349, 374, 376, 378, 380, 385, 410, 412, 414, 416, 421, 444, 446, 448, 450, and 455 each coordinate Ca(2+).

The protein belongs to the protein kinase superfamily. Ser/Thr protein kinase family. CDPK subfamily.

It catalyses the reaction L-seryl-[protein] + ATP = O-phospho-L-seryl-[protein] + ADP + H(+). The enzyme catalyses L-threonyl-[protein] + ATP = O-phospho-L-threonyl-[protein] + ADP + H(+). Activated by calcium. Autophosphorylation may play an important role in the regulation of the kinase activity. May play a role in signal transduction pathways that involve calcium as a second messenger. The sequence is that of Calcium-dependent protein kinase 26 (CPK26) from Arabidopsis thaliana (Mouse-ear cress).